We begin with the raw amino-acid sequence, 91 residues long: Heat shock protein 30E (91 aa).

The interval 62-91 (RDQIRQPGAPESEGTSPNTGKDGKDPGNSL) is disordered. Positions 82 to 91 (KDGKDPGNSL) are enriched in basic and acidic residues.

The protein belongs to the small heat shock protein (HSP20) family.

This Xenopus laevis (African clawed frog) protein is Heat shock protein 30E (hsp30e).